Consider the following 284-residue polypeptide: Stomatin (284 aa).

Residues 1 to 31 (MSDKRQSSHVQSQRIPESFRENSKTELGACG) are Cytoplasmic-facing. A Phosphoserine modification is found at serine 18. Cysteine 30 is lipidated: S-palmitoyl cysteine. An intramembrane segment occupies 32 to 52 (WILVAASFFFVIITFPISIWI). Residues 53–284 (CIKIVKEYER…MLQGIMGSNH (232 aa)) are Cytoplasmic-facing. A lipid anchor (S-palmitoyl cysteine) is attached at cysteine 87. 2 positions are modified to phosphoserine: serine 161 and serine 244. The segment at 265–273 (STIVFPLPV) is required for homooligomerization. The tract at residues 267-269 (IVF) is required for lipid raft association. Residues 273 to 284 (VDMLQGIMGSNH) are interaction with LANCL1.

Belongs to the band 7/mec-2 family. Interacts with LANCL1. Interacts with SLC2A1. Interacts with SLC4A1; this interaction positively regulates SLC4A1 activity. Identified in large complexes with SLC40A1, SLC14A1, SLC29A1 and AQP1. Homodimer and higher order homooligomers. The homodimer is banana-shaped. Interacts with ASIC1, ASIC2 and ASIC3. Interacts with STOML1; may redistribute STOM from the plasma membrane to late endosomes. As to expression, expressed in all sensory neurons of the dorsal root ganglia. In the CNS, expressed in many neurons of the spinal cord, medulla and pons. Expressed only in scattered neurons in the cortex, hippocampus, thalamus and basal ganglia. In the cerebellum, expressed in all Purkinje cells (at protein level). Widely expressed with high levels in heart, liver, skeletal muscle and testis and low levels in lung, brain and spleen.

Its subcellular location is the cell membrane. It is found in the cytoplasm. It localises to the cytoskeleton. The protein resides in the membrane raft. The protein localises to the melanosome. Its subcellular location is the cytoplasmic vesicle. Its function is as follows. Regulates ion channel activity and transmembrane ion transport. Regulates ASIC2 and ASIC3 channel activity. This Mus musculus (Mouse) protein is Stomatin.